Consider the following 414-residue polypeptide: Serine/threonine transporter SstT (414 aa).

Residues 2–15 (TTQRSPGLFRRLAH) lie on the Cytoplasmic side of the membrane. Residues 16 to 36 (GSLVKQILVGLVLGILLAWIS) form a helical membrane-spanning segment. At 37 to 45 (KPAAEAVGL) the chain is on the periplasmic side. A helical transmembrane segment spans residues 46–66 (LGTLFVGALKAVAPILVLMLV). The Cytoplasmic segment spans residues 67 to 83 (MASIANHQHGQKTNIRP). A helical membrane pass occupies residues 84-104 (ILFLYLLGTFSAALAAVVFSF). The Periplasmic segment spans residues 105–142 (AFPSTLHLSSSAGDISPPSGIVEVMRGLVMSMVSNPID). A helical membrane pass occupies residues 143 to 163 (ALLKGNYIGILVWAIGLGFAL). The Cytoplasmic segment spans residues 164–179 (RHGNETTKNLVNDLSN). A helical transmembrane segment spans residues 180–200 (AVTFMVKLVIRFAPIGIFGLV). The Periplasmic segment spans residues 201–217 (SSTLATTGFSTLWGYAQ). Residues 218–238 (LLVVLVGCMLLVALVVNPLLV) form a helical membrane-spanning segment. Residues 239–299 (WWKIRRNPFP…VSIPLGATIN (61 aa)) lie on the Cytoplasmic side of the membrane. A helical membrane pass occupies residues 300–320 (MAGAAITITVLTLAAVNTLGI). The Periplasmic portion of the chain corresponds to 321–331 (PVDLPTALLLS). A helical membrane pass occupies residues 332-352 (VVASLCACGASGVAGGSLLLI). Residues 353-414 (PLACNMFGIS…DRLANSALRN (62 aa)) are Cytoplasmic-facing.

Belongs to the dicarboxylate/amino acid:cation symporter (DAACS) (TC 2.A.23) family.

The protein resides in the cell inner membrane. The catalysed reaction is L-serine(in) + Na(+)(in) = L-serine(out) + Na(+)(out). The enzyme catalyses L-threonine(in) + Na(+)(in) = L-threonine(out) + Na(+)(out). Involved in the import of serine and threonine into the cell, with the concomitant import of sodium (symport system). In Shigella boydii serotype 4 (strain Sb227), this protein is Serine/threonine transporter SstT.